We begin with the raw amino-acid sequence, 171 residues long: Der GTPase-activating protein YihI (171 aa).

Disordered stretches follow at residues 1-99 and 145-171; these read MKKP…QAEL and LSYD…RGGN. The span at 20-30 shows a compositional bias: basic and acidic residues; it reads TREELNQEARD. The span at 31 to 40 shows a compositional bias: basic residues; it reads RKRLKKHRGH. Residues 147–160 are compositionally biased toward acidic residues; the sequence is YDDDEEDDEEDEKQ.

This sequence belongs to the YihI family. As to quaternary structure, interacts with Der.

In terms of biological role, a GTPase-activating protein (GAP) that modifies Der/EngA GTPase function. May play a role in ribosome biogenesis. The protein is Der GTPase-activating protein YihI of Salmonella agona (strain SL483).